Consider the following 2362-residue polypeptide: Filaggrin-2 (2362 aa).

Positions 1-81 (MAYLLRSVVT…TEFILMIFKL (81 aa)) are S-100-like. 2 EF-hand domains span residues 8 to 43 (VVTI…EFRP) and 49 to 84 (DDPD…LALA). Ca(2+) is bound by residues aspartate 62, aspartate 64, aspartate 66, arginine 68, and glutamate 73. Disordered stretches follow at residues 96–238 (ASGS…GLSC) and 284–2109 (GCCR…SSIP). Over residues 111–120 (EESETEEEEE) the composition is skewed to acidic residues. Basic and acidic residues-rich tracts occupy residues 159–174 (KRLE…EESR) and 189–214 (NKEK…PSRE). Filaggrin repeat units follow at residues 261–308 (GYNT…NQSC) and 373–414 (HSSC…SNGF). Polar residues-rich tracts occupy residues 284–317 (GCCR…CQSG), 342–375 (SCSQ…SHSS), and 383–395 (GATQ…QQRM). Low complexity predominate over residues 396 to 411 (SSCGHSSSSHQKGCSS). Polar residues-rich tracts occupy residues 421–443 (ASGS…SSGF) and 450–469 (SGQS…SGYS). Composition is skewed to low complexity over residues 474 to 519 (GSGQ…QSSG), 539 to 550 (GSRQSSGSEQHG), and 567 to 580 (SQSS…SGSQ). A Filaggrin 3 repeat occupies 555-607 (QSSGSGKHETGPSQSSSSGHHGSGSQQHGGGSGQSTGFGEHESSSGHSSSSGQ). The segment covering 581–590 (QHGGGSGQST) has biased composition (gly residues). Residues 599–618 (SGHSSSSGQHRSGSRHSSGS) show a composition bias toward low complexity. The span at 632-653 (GHHGSGSQQHGGGSGNSTGFGE) shows a compositional bias: gly residues. Residues 654–675 (HGSSSHPLPSSGQNESSSGQSS) are compositionally biased toward low complexity. One copy of the Filaggrin 4 repeat lies at 672–723 (GQSSRSERHGTGSGQSSGFGQHGSGSHQSSSSGHNEYGSGQTSSSWPHGKGS). The segment covering 682 to 694 (TGSGQSSGFGQHG) has biased composition (gly residues). 3 stretches are compositionally biased toward low complexity: residues 695–705 (SGSHQSSSSGH), 728–754 (GYGE…QSSS), and 780–798 (GYGE…WQHG). The segment covering 826 to 838 (TGSGQSLGFGQHG) has biased composition (gly residues). The segment covering 846–864 (SSGHYESVSEPSSSSWQHG) has biased composition (low complexity). The Filaggrin 5 repeat unit spans residues 880–927 (HGQSSSAWNHGNESGQSNGYGEHESGHGQSSSAWNHGNESGQSNGFGE). Polar residues-rich tracts occupy residues 886 to 896 (AWNHGNESGQS) and 912 to 925 (AWNH…SNGF). The span at 973–982 (ESSEGEEHSV) shows a compositional bias: basic and acidic residues. A Filaggrin 6 repeat occupies 984–1035 (PRRYSGYGHGQGQAGHQQRESGYGQRGRPQGPSQDSSRQPQAGHGQPSQSGY). Residues 1014-1035 (GPSQDSSRQPQAGHGQPSQSGY) are compositionally biased toward polar residues. Basic and acidic residues predominate over residues 1047–1059 (EYSEGEAHSEVSQ). Over residues 1067 to 1077 (CHCHCHGQARH) the composition is skewed to basic residues. Over residues 1104–1121 (GPGQPSQSGSRRSPRSQP) the composition is skewed to low complexity. The span at 1142 to 1152 (SGHGHGQGQGQ) shows a compositional bias: gly residues. Residues 1162-1174 (HGQQGRPQGPSQD) are compositionally biased toward polar residues. A Filaggrin 7 repeat occupies 1165–1210 (QGRPQGPSQDSSRQPQAGQGQPSQSGSGRSPRRSPVHPESSEGEEH). Low complexity predominate over residues 1175-1193 (SSRQPQAGQGQPSQSGSGR). Phosphoserine occurs at positions 1198, 1204, and 1205. Residues 1220–1232 (SGHGHGQGQGQGQ) are compositionally biased toward gly residues. The span at 1255-1273 (SSRQPQAGQGQPSQSGSGR) shows a compositional bias: low complexity. Serine 1278, serine 1284, and serine 1285 each carry phosphoserine. The stretch at 1280 to 1334 (VHPESSEGEEHSVVPQRHSGSGHGHGQGQGQAGHQQRESVHGQPVRPEVPTQDSS) is one Filaggrin 8 repeat. The span at 1300–1310 (SGHGHGQGQGQ) shows a compositional bias: gly residues. The segment covering 1333–1351 (SSRQPQAGQGQPSQSGSGR) has biased composition (low complexity). Residues serine 1356, serine 1362, and serine 1363 each carry the phosphoserine modification. Residues 1377 to 1396 (ESCHCHCHDQAGHQQRESVH) show a composition bias toward basic and acidic residues. Residues 1413-1436 (PQAGPGQPSQSGSRRSPRSSPVHP) are compositionally biased toward low complexity. Phosphoserine occurs at positions 1438 and 1439. The segment covering 1454-1464 (SGHGHGQGQGQ) has biased composition (gly residues). A Filaggrin 9 repeat occupies 1474 to 1522 (HGQRGRPQGPTQDSSRQPQAGQGQPSQSGSGRSPRRSPVHPESSEGEEH). Residues 1487 to 1505 (SSRQPQAGQGQPSQSGSGR) are compositionally biased toward low complexity. A phosphoserine mark is found at serine 1510, serine 1516, and serine 1517. Residues 1532-1544 (SGHGHGHGQGQGQ) are compositionally biased toward gly residues. Residues 1567-1585 (SSRQPQAGQGQPSQSGSGR) are compositionally biased toward low complexity. A phosphoserine mark is found at serine 1590, serine 1596, and serine 1597. Low complexity-rich tracts occupy residues 1643-1661 (SSRQ…GSGR) and 1683-1696 (QRHS…GQGQ). A compositionally biased stretch (basic and acidic residues) spans 1698-1708 (HAEHQQRESVH). A Filaggrin 10 repeat occupies 1723–1756 (RQPQAGQGQPSLSGSGRSPRRSPVHPESSEGEEH). Low complexity predominate over residues 1724–1739 (QPQAGQGQPSLSGSGR). Residues serine 1744, serine 1750, serine 1751, serine 1824, serine 1830, and serine 1831 each carry the phosphoserine modification. The span at 1801-1825 (SSRQPQAGQGQPSQSGSGRSPGRSP) shows a compositional bias: low complexity. The segment covering 1829–1848 (ESSEGEEHSVVPQRHSESGH) has biased composition (basic and acidic residues). Low complexity predominate over residues 1879-1897 (SSRQPQAGQGQPSQSGSGR). Phosphoserine occurs at positions 1902, 1908, and 1909. Positions 1924 to 1934 (SGHGHGQGQGQ) are enriched in gly residues. The span at 1949–1975 (RPQGPSQDSSSQPQASQGQPSQSGSGR) shows a compositional bias: low complexity. Phosphoserine occurs at positions 1980, 1986, and 1987. Over residues 2002–2012 (SGHGHGQGQGQ) the composition is skewed to gly residues. Residues 2016-2070 (QQRESLHGQRGRSQSPFHPSHSIHWQSKCTISKKSSRLSGHYGRNHFQSTISGNQ) form a Filaggrin 11 repeat. Composition is skewed to polar residues over residues 2026 to 2048 (GRSQ…TISK), 2061 to 2079 (HFQS…SSRH), and 2100 to 2109 (LRSNSQSSIP). Serine 2104 carries the phosphoserine modification. Residues 2218–2259 (DDSQYILFQKHLESPSFGNQSGFSPNERQLYTCNESIDSYHL) form a Filaggrin 12 repeat.

It belongs to the S100-fused protein family. In the N-terminal section; belongs to the S-100 family. Deiminated by PADI1, PADI2 or PADI3 in vitro. The deiminated form is degraded by calpain-1/CAPN1 more quickly and into shorter peptides than the intact protein. In terms of processing, may be processed by calpain-1/CAPN1.

The protein resides in the cytoplasm. It localises to the cytoplasmic granule. Its function is as follows. Essential for normal cell-cell adhesion in the cornified cell layers. Important for proper integrity and mechanical strength of the stratum corneum of the epidermis. In Mus musculus (Mouse), this protein is Filaggrin-2 (Flg2).